A 545-amino-acid chain; its full sequence is CTP synthase (545 aa).

The tract at residues 1-266 is amidoligase domain; it reads MATNYIFVTG…DTFVCDRFRL (266 aa). Ser-14 contacts CTP. Ser-14 contacts UTP. Residues 15-20 and Asp-72 contribute to the ATP site; that span reads SLGKGI. Residues Asp-72 and Glu-140 each coordinate Mg(2+). Residues 147–149, 187–192, and Lys-223 each bind CTP; these read DIE and KTKPTQ. UTP is bound by residues 187-192 and Lys-223; that span reads KTKPTQ. Residue 239-241 participates in ATP binding; sequence KDV. The Glutamine amidotransferase type-1 domain occupies 291–542; the sequence is TIGMVGKYVE…VAAAKAYQDS (252 aa). Position 352 (Gly-352) interacts with L-glutamine. Cys-379 acts as the Nucleophile; for glutamine hydrolysis in catalysis. L-glutamine is bound by residues 380-383, Glu-403, and Arg-470; that span reads LGMQ. Residues His-515 and Glu-517 contribute to the active site.

The protein belongs to the CTP synthase family. In terms of assembly, homotetramer.

It catalyses the reaction UTP + L-glutamine + ATP + H2O = CTP + L-glutamate + ADP + phosphate + 2 H(+). The catalysed reaction is L-glutamine + H2O = L-glutamate + NH4(+). It carries out the reaction UTP + NH4(+) + ATP = CTP + ADP + phosphate + 2 H(+). Its pathway is pyrimidine metabolism; CTP biosynthesis via de novo pathway; CTP from UDP: step 2/2. Its activity is regulated as follows. Allosterically activated by GTP, when glutamine is the substrate; GTP has no effect on the reaction when ammonia is the substrate. The allosteric effector GTP functions by stabilizing the protein conformation that binds the tetrahedral intermediate(s) formed during glutamine hydrolysis. Inhibited by the product CTP, via allosteric rather than competitive inhibition. Its function is as follows. Catalyzes the ATP-dependent amination of UTP to CTP with either L-glutamine or ammonia as the source of nitrogen. Regulates intracellular CTP levels through interactions with the four ribonucleotide triphosphates. This Actinobacillus pleuropneumoniae serotype 5b (strain L20) protein is CTP synthase.